The primary structure comprises 202 residues: Small ribosomal subunit protein uS4 (202 aa).

Residues 22-43 are disordered; it reads TRKSARRAYPPGQHGQNRRKRS. The S4 RNA-binding domain occupies 90–152; it reads MRLDNTVFRL…EKSKEMVKTN (63 aa).

This sequence belongs to the universal ribosomal protein uS4 family. Part of the 30S ribosomal subunit. Contacts protein S5. The interaction surface between S4 and S5 is involved in control of translational fidelity.

One of the primary rRNA binding proteins, it binds directly to 16S rRNA where it nucleates assembly of the body of the 30S subunit. Functionally, with S5 and S12 plays an important role in translational accuracy. The polypeptide is Small ribosomal subunit protein uS4 (Trichodesmium erythraeum (strain IMS101)).